A 208-amino-acid polypeptide reads, in one-letter code: Small ribosomal subunit protein uS4 (208 aa).

Residues 28-48 (YFEKRPYPPGEHGRARRRTES) are disordered. One can recognise an S4 RNA-binding domain in the interval 95-159 (MRLDALVLRS…ARTPFQVAAA (65 aa)).

This sequence belongs to the universal ribosomal protein uS4 family. As to quaternary structure, part of the 30S ribosomal subunit. Contacts protein S5. The interaction surface between S4 and S5 is involved in control of translational fidelity.

In terms of biological role, one of the primary rRNA binding proteins, it binds directly to 16S rRNA where it nucleates assembly of the body of the 30S subunit. Its function is as follows. With S5 and S12 plays an important role in translational accuracy. In Beutenbergia cavernae (strain ATCC BAA-8 / DSM 12333 / CCUG 43141 / JCM 11478 / NBRC 16432 / NCIMB 13614 / HKI 0122), this protein is Small ribosomal subunit protein uS4.